The following is a 247-amino-acid chain: uncharacterized protein (247 aa).

Transmembrane regions (helical) follow at residues 9-29 and 37-57; these read IIAI…FLIF and SYFL…SLII.

It localises to the cell membrane. This is an uncharacterized protein from Methanocaldococcus jannaschii (strain ATCC 43067 / DSM 2661 / JAL-1 / JCM 10045 / NBRC 100440) (Methanococcus jannaschii).